The primary structure comprises 101 residues: MQLTLEFGGGLELLCDSEKIHKVNVDLPNGADSDDFTMKHLLSWVRTNLIKERPEMFMKGDTVRPGVLVLVNDCDWELSGQLDTVIEDKDVVVFISTLHGG.

Position 101 is a 1-thioglycine (glycine 101). Glycine 101 is covalently cross-linked (Glycyl lysine isopeptide (Gly-Lys) (interchain with K-? in acceptor proteins)).

This sequence belongs to the URM1 family. Post-translationally, C-terminal thiocarboxylation occurs in 2 steps, it is first acyl-adenylated (-COAMP) via the hesA/moeB/thiF part of the MOCS3 homolog, then thiocarboxylated (-COSH) via the rhodanese domain of the MOCS3 homolog.

It localises to the cytoplasm. The protein operates within tRNA modification; 5-methoxycarbonylmethyl-2-thiouridine-tRNA biosynthesis. Acts as a sulfur carrier required for 2-thiolation of mcm(5)S(2)U at tRNA wobble positions of cytosolic tRNA(Lys), tRNA(Glu) and tRNA(Gln). Serves as sulfur donor in tRNA 2-thiolation reaction by being thiocarboxylated (-COSH) at its C-terminus by MOCS3. The sulfur is then transferred to tRNA to form 2-thiolation of mcm(5)S(2)U. Also acts as a ubiquitin-like protein (UBL) that is covalently conjugated via an isopeptide bond to lysine residues of target proteins. The thiocarboxylated form serves as substrate for conjugation and oxidative stress specifically induces the formation of UBL-protein conjugates. The protein is Ubiquitin-related modifier 1 homolog 1 of Arabidopsis thaliana (Mouse-ear cress).